The following is a 450-amino-acid chain: Adenylosuccinate lyase (450 aa).

N(6)-(1,2-dicarboxyethyl)-AMP contacts are provided by residues 9–10, 75–77, and 101–102; these read RY, HHD, and TS. The active-site Proton donor/acceptor is the His149. A N(6)-(1,2-dicarboxyethyl)-AMP-binding site is contributed by Gln223. The active-site Proton donor/acceptor is the Ser273. Residues Ser274, 279 to 281, and 318 to 322 contribute to the N(6)-(1,2-dicarboxyethyl)-AMP site; these read KRN and SVERV.

It belongs to the lyase 1 family. Adenylosuccinate lyase subfamily. As to quaternary structure, homotetramer. Residues from neighboring subunits contribute catalytic and substrate-binding residues to each active site.

It carries out the reaction N(6)-(1,2-dicarboxyethyl)-AMP = fumarate + AMP. It catalyses the reaction (2S)-2-[5-amino-1-(5-phospho-beta-D-ribosyl)imidazole-4-carboxamido]succinate = 5-amino-1-(5-phospho-beta-D-ribosyl)imidazole-4-carboxamide + fumarate. It participates in purine metabolism; AMP biosynthesis via de novo pathway; AMP from IMP: step 2/2. Its pathway is purine metabolism; IMP biosynthesis via de novo pathway; 5-amino-1-(5-phospho-D-ribosyl)imidazole-4-carboxamide from 5-amino-1-(5-phospho-D-ribosyl)imidazole-4-carboxylate: step 2/2. Catalyzes two reactions in de novo purine nucleotide biosynthesis. Catalyzes the breakdown of 5-aminoimidazole- (N-succinylocarboxamide) ribotide (SAICAR or 2-[5-amino-1-(5-phospho-beta-D-ribosyl)imidazole-4-carboxamido]succinate) to 5-aminoimidazole-4-carboxamide ribotide (AICAR or 5-amino-1-(5-phospho-beta-D-ribosyl)imidazole-4-carboxamide) and fumarate, and of adenylosuccinate (ADS or N(6)-(1,2-dicarboxyethyl)-AMP) to adenosine monophosphate (AMP) and fumarate. In Pyrococcus abyssi (strain GE5 / Orsay), this protein is Adenylosuccinate lyase (purB).